The following is a 58-amino-acid chain: Large ribosomal subunit protein bL32c (58 aa).

This sequence belongs to the bacterial ribosomal protein bL32 family.

The protein localises to the plastid. It localises to the chloroplast. This chain is Large ribosomal subunit protein bL32c (rpl32), found in Adiantum capillus-veneris (Maidenhair fern).